Consider the following 674-residue polypeptide: DNA ligase (674 aa).

Residues 34–38 (DSEYD), 83–84 (SL), and glutamate 114 contribute to the NAD(+) site. Lysine 116 serves as the catalytic N6-AMP-lysine intermediate. NAD(+) contacts are provided by arginine 137, glutamate 174, lysine 290, and lysine 314. 4 residues coordinate Zn(2+): cysteine 405, cysteine 408, cysteine 424, and cysteine 429. The BRCT domain maps to 587 to 674 (QSGTQFDGKM…KLSLIENTKF (88 aa)).

Belongs to the NAD-dependent DNA ligase family. LigA subfamily. Requires Mg(2+) as cofactor. It depends on Mn(2+) as a cofactor.

The catalysed reaction is NAD(+) + (deoxyribonucleotide)n-3'-hydroxyl + 5'-phospho-(deoxyribonucleotide)m = (deoxyribonucleotide)n+m + AMP + beta-nicotinamide D-nucleotide.. DNA ligase that catalyzes the formation of phosphodiester linkages between 5'-phosphoryl and 3'-hydroxyl groups in double-stranded DNA using NAD as a coenzyme and as the energy source for the reaction. It is essential for DNA replication and repair of damaged DNA. In Endomicrobium trichonymphae, this protein is DNA ligase.